Here is a 97-residue protein sequence, read N- to C-terminus: Small integral membrane protein 8 (97 aa).

The tract at residues 1–24 is disordered; it reads MSSAPEPPTFKKEPPKEKDFQSPG. Residues 9-20 are compositionally biased toward basic and acidic residues; that stretch reads TFKKEPPKEKDF. The helical transmembrane segment at 48-67 threads the bilayer; it reads PVMAFGLVTLSLCVAYIGYL.

Belongs to the SMIM8 family.

The protein resides in the membrane. This chain is Small integral membrane protein 8 (SMIM8), found in Pongo abelii (Sumatran orangutan).